We begin with the raw amino-acid sequence, 613 residues long: Dihydroxy-acid dehydratase (613 aa).

D81 provides a ligand contact to Mg(2+). C122 is a binding site for [2Fe-2S] cluster. Residues D123 and K124 each contribute to the Mg(2+) site. An N6-carboxylysine modification is found at K124. C195 contributes to the [2Fe-2S] cluster binding site. Position 491 (E491) interacts with Mg(2+). The Proton acceptor role is filled by S517.

Belongs to the IlvD/Edd family. In terms of assembly, homodimer. [2Fe-2S] cluster is required as a cofactor. Mg(2+) serves as cofactor.

The enzyme catalyses (2R)-2,3-dihydroxy-3-methylbutanoate = 3-methyl-2-oxobutanoate + H2O. The catalysed reaction is (2R,3R)-2,3-dihydroxy-3-methylpentanoate = (S)-3-methyl-2-oxopentanoate + H2O. The protein operates within amino-acid biosynthesis; L-isoleucine biosynthesis; L-isoleucine from 2-oxobutanoate: step 3/4. Its pathway is amino-acid biosynthesis; L-valine biosynthesis; L-valine from pyruvate: step 3/4. Functions in the biosynthesis of branched-chain amino acids. Catalyzes the dehydration of (2R,3R)-2,3-dihydroxy-3-methylpentanoate (2,3-dihydroxy-3-methylvalerate) into 2-oxo-3-methylpentanoate (2-oxo-3-methylvalerate) and of (2R)-2,3-dihydroxy-3-methylbutanoate (2,3-dihydroxyisovalerate) into 2-oxo-3-methylbutanoate (2-oxoisovalerate), the penultimate precursor to L-isoleucine and L-valine, respectively. The sequence is that of Dihydroxy-acid dehydratase from Aliivibrio fischeri (strain ATCC 700601 / ES114) (Vibrio fischeri).